The following is a 365-amino-acid chain: Carbamoyl phosphate synthase small chain (365 aa).

CPSase stretches follow at residues 1-166 (MKRQ…PSPG) and 1-169 (MKRQ…GRGH). Residues Ser-45, Gly-218, and Gly-220 each contribute to the L-glutamine site. The 188-residue stretch at 170–357 (RVVLVDFGMK…LTMIENFKKE (188 aa)) folds into the Glutamine amidotransferase type-1 domain. Cys-245 serves as the catalytic Nucleophile. The L-glutamine site is built by Leu-246, Gln-249, Asn-287, Gly-289, and Tyr-290. Catalysis depends on residues His-330 and Glu-332.

The protein belongs to the CarA family. In terms of assembly, composed of two chains; the small (or glutamine) chain promotes the hydrolysis of glutamine to ammonia, which is used by the large (or ammonia) chain to synthesize carbamoyl phosphate. Tetramer of heterodimers (alpha,beta)4.

The enzyme catalyses hydrogencarbonate + L-glutamine + 2 ATP + H2O = carbamoyl phosphate + L-glutamate + 2 ADP + phosphate + 2 H(+). It catalyses the reaction L-glutamine + H2O = L-glutamate + NH4(+). The protein operates within amino-acid biosynthesis; L-arginine biosynthesis; carbamoyl phosphate from bicarbonate: step 1/1. It participates in pyrimidine metabolism; UMP biosynthesis via de novo pathway; (S)-dihydroorotate from bicarbonate: step 1/3. In terms of biological role, small subunit of the glutamine-dependent carbamoyl phosphate synthetase (CPSase). CPSase catalyzes the formation of carbamoyl phosphate from the ammonia moiety of glutamine, carbonate, and phosphate donated by ATP, constituting the first step of 2 biosynthetic pathways, one leading to arginine and/or urea and the other to pyrimidine nucleotides. The small subunit (glutamine amidotransferase) binds and cleaves glutamine to supply the large subunit with the substrate ammonia. The sequence is that of Carbamoyl phosphate synthase small chain from Bacillus cereus (strain ATCC 10987 / NRS 248).